The chain runs to 1025 residues: Multidrug resistance protein MdtC (1025 aa).

At 1-6 the chain is on the cytoplasmic side; sequence MKFFAL. The chain crosses the membrane as a helical span at residues 7–29; sequence FIYRPVATILLSVAITLCGILGF. Residues 30 to 335 lie on the Periplasmic side of the membrane; that stretch reads RMLPVAPLPQ…TIRASLEEVE (306 aa). The chain crosses the membrane as a helical span at residues 336-353; it reads QTLIISVALVILVVFLFL. The Cytoplasmic portion of the chain corresponds to 354-359; it reads RSGRAT. Residues 360–379 form a helical membrane-spanning segment; sequence IIPAVAVPVSLIGTFAAMYL. At 380-388 the chain is on the periplasmic side; the sequence is CGFSLNNLS. A helical transmembrane segment spans residues 389–411; the sequence is LMALTIATGFVVDDAIVVLENIA. Topologically, residues 412-430 are cytoplasmic; sequence RHLEAGMKPLQAALQGTRE. A helical transmembrane segment spans residues 431 to 453; sequence VGFTVLSMSLSLVAVFLPLLLMG. At 454 to 467 the chain is on the periplasmic side; that stretch reads GLPGRLLREFAVTL. Residues 468 to 490 traverse the membrane as a helical segment; that stretch reads SVAIGISLLVSLTLTPMMCGWML. Over 491 to 852 the chain is Cytoplasmic; that stretch reads KASKPREQKR…QVFQETMNSQ (362 aa). The chain crosses the membrane as a helical span at residues 853–875; that stretch reads VILIIAAIATVYIVLGILYESYV. The Periplasmic portion of the chain corresponds to 876 to 894; sequence HPLTILSTLPSAGVGALLA. The helical transmembrane segment at 895-917 threads the bilayer; it reads LELFNAPFSLIALIGIMLLIGIV. At 918–947 the chain is on the cytoplasmic side; sequence KKNAIMMVDFALEAQRHGNLTPQEAIFQAC. A helical transmembrane segment spans residues 948–970; it reads LLRFRPIMMTTLAALFGALPLVL. Residues 971–984 are Periplasmic-facing; sequence SGGDGSELRQPLGI. Residues 985–1007 traverse the membrane as a helical segment; it reads TIVGGLVMSQLLTLYTTPVVYLF. At 1008–1025 the chain is on the cytoplasmic side; it reads FDRLRLRFSRKPKQAVTE.

Belongs to the resistance-nodulation-cell division (RND) (TC 2.A.6) family. MdtC subfamily. As to quaternary structure, part of a tripartite efflux system composed of MdtA, MdtB and MdtC. MdtC forms a heteromultimer with MdtB.

The protein localises to the cell inner membrane. In terms of biological role, the MdtABC tripartite complex confers resistance against novobiocin and deoxycholate. This is Multidrug resistance protein MdtC from Escherichia coli O6:H1 (strain CFT073 / ATCC 700928 / UPEC).